The sequence spans 762 residues: Protein PHTF1 (762 aa).

Residues 6-150 form the PHTF domain; the sequence is RDAISWYQKK…VHCQIVSTQI (145 aa). A run of 3 helical transmembrane segments spans residues 77–97, 99–119, and 121–141; these read GLVR…VTSL, IFVW…LYLM, and PIVS…MGTV. The segment at 152–184 is disordered; the sequence is RPSGNNGNRRRRKLRKTVNGDGTRDNGNNSPDK. Asparagine 179 and asparagine 224 each carry an N-linked (GlcNAc...) asparagine glycan. A phosphoserine mark is found at serine 272, serine 276, serine 277, serine 334, and serine 336. The disordered stretch occupies residues 345-415; that stretch reads AAFSQGSRSG…NTLHSGTKRD (71 aa). Low complexity predominate over residues 348–364; that stretch reads SQGSRSGMSGGSRSLNL. A glycan (N-linked (GlcNAc...) asparagine) is linked at asparagine 363. Residues 365 to 376 are compositionally biased toward basic and acidic residues; it reads SRRDSESTRHDS. A glycan (N-linked (GlcNAc...) asparagine) is linked at asparagine 431. 4 consecutive transmembrane segments (helical) span residues 473-493, 515-535, 611-631, and 645-665; these read GVGY…FPFL, TLFC…INFF, VVVS…CAQV, and WEFL…ASLG. 2 N-linked (GlcNAc...) asparagine glycosylation sites follow: asparagine 674 and asparagine 733. A helical membrane pass occupies residues 737–757; sequence VVILSAVSGVISDLLGFNIRL.

In terms of assembly, interacts with FEM1B. Highly expressed in testis.

The protein localises to the endoplasmic reticulum membrane. Its subcellular location is the golgi apparatus. It is found in the cis-Golgi network membrane. This Rattus norvegicus (Rat) protein is Protein PHTF1.